Consider the following 170-residue polypeptide: Protein SprT (170 aa).

The region spanning 22–165 is the SprT-like domain; sequence LQLANQHLGT…RQCGEKLQFI (144 aa). Histidine 78 is a binding site for Zn(2+). Glutamate 79 is a catalytic residue. Histidine 82 is a Zn(2+) binding site.

It belongs to the SprT family. Zn(2+) is required as a cofactor.

The protein resides in the cytoplasm. The chain is Protein SprT from Yersinia pseudotuberculosis serotype IB (strain PB1/+).